Here is a 513-residue protein sequence, read N- to C-terminus: Ribonuclease Y (513 aa).

The chain crosses the membrane as a helical span at residues 6 to 26 (YIIIAVVIIIICVILGLYIVD). A KH domain is found at 203-288 (TVHVVNLPND…EMVEKAKKEV (86 aa)). Residues 329-422 (VLKHSIEVSH…VQAADAISAA (94 aa)) form the HD domain.

Belongs to the RNase Y family.

Its subcellular location is the cell membrane. Functionally, endoribonuclease that initiates mRNA decay. The protein is Ribonuclease Y of Clostridium botulinum (strain ATCC 19397 / Type A).